Here is a 672-residue protein sequence, read N- to C-terminus: MLRNGNKYLLMLVSIIMLTACISQSRTSFIPPQDRESLLAEQPWPHNGFVAISWHNVEDEAADQRFMSVRTSALREQFAWLRENGYQPVSIAQIREAHRGGKPLPEKAVVLTFDDGYQSFYTRVFPILQAFQWPAVWAPVGSWVDTPADKQVKFGDELVDREYFATWQQVREVARSRLVELASHTWNSHYGIQANATGSLLPVYVNRAYFTDHARYETAAEYRERIRLDAVKMTEYLRTKVEVNPHVFVWPYGEANGIAIEELKKLGYDMFFTLESGLANASQLDSIPRVLIANNPSLKEFAQQIITVQEKSPQRIMHIDLDYVYDENLQQMDRNIDVLIQRVKDMQISTVYLQAFADPDGDGLVKEVWFPNRLLPMKADIFSRVAWQLRTRSGVNIYAWMPVLSWDLDPTLTRVKYLPTGEKKAQIHPEQYHRLSPFDDRVRAQVGMLYEDLAGHAAFDGILFHDDALLSDYEDASAPAITAYQQAGFSGSLSEIRQNPEQFKQWARFKSRALTDFTLELSARVKAIRGPHIKTARNIFALPVIQPESEAWFAQNYADFLKSYDWTAIMAMPYLEGVAEKSADQWLIQLTNQIKNIPQAKDKSILELQAQNWQKNGQHQAISSQQLAHWMSLLQLNGVKNYGYYPDNFLHNQPEIDLIRPEFSTAWYPKND.

A signal peptide spans 1 to 20 (MLRNGNKYLLMLVSIIMLTA). C21 carries the N-palmitoyl cysteine lipid modification. A lipid anchor (S-diacylglycerol cysteine) is attached at C21. The region spanning 107-349 (KAVVLTFDDG…IQRVKDMQIS (243 aa)) is the NodB homology domain.

Belongs to the polysaccharide deacetylase family.

It localises to the cell outer membrane. In terms of biological role, catalyzes the N-deacetylation of poly-beta-1,6-N-acetyl-D-glucosamine (PGA), a biofilm adhesin polysaccharide. N-deacetylation promotes PGA export through the PgaA porin. This chain is Poly-beta-1,6-N-acetyl-D-glucosamine N-deacetylase (pgaB), found in Escherichia coli (strain K12).